The chain runs to 230 residues: Ureidoacrylate amidohydrolase RutB (230 aa).

Asp-24 acts as the Proton acceptor in catalysis. Residue Lys-133 is part of the active site. The active-site Nucleophile is Cys-166.

Belongs to the isochorismatase family. RutB subfamily.

It catalyses the reaction (Z)-3-ureidoacrylate + H2O + H(+) = (Z)-3-aminoacrylate + NH4(+) + CO2. The enzyme catalyses (Z)-3-ureidoacrylate + H2O = (Z)-3-aminoacrylate + carbamate + H(+). It carries out the reaction (Z)-2-methylureidoacrylate + H2O + H(+) = (Z)-2-methylaminoacrylate + NH4(+) + CO2. In terms of biological role, hydrolyzes ureidoacrylate to form aminoacrylate and carbamate. The carbamate hydrolyzes spontaneously, thereby releasing one of the nitrogen atoms of the pyrimidine ring as ammonia and one of its carbon atoms as CO2. This chain is Ureidoacrylate amidohydrolase RutB, found in Enterobacter sp. (strain 638).